A 297-amino-acid polypeptide reads, in one-letter code: N-acetylmuramic acid 6-phosphate etherase (297 aa).

The SIS domain occupies A56 to K219. Catalysis depends on E84, which acts as the Proton donor. E115 is an active-site residue.

Belongs to the GCKR-like family. MurNAc-6-P etherase subfamily. In terms of assembly, homodimer.

The catalysed reaction is N-acetyl-D-muramate 6-phosphate + H2O = N-acetyl-D-glucosamine 6-phosphate + (R)-lactate. Its pathway is amino-sugar metabolism; N-acetylmuramate degradation. Functionally, specifically catalyzes the cleavage of the D-lactyl ether substituent of MurNAc 6-phosphate, producing GlcNAc 6-phosphate and D-lactate. The protein is N-acetylmuramic acid 6-phosphate etherase of Lactococcus lactis subsp. lactis (strain IL1403) (Streptococcus lactis).